Reading from the N-terminus, the 285-residue chain is NAD kinase (285 aa).

Aspartate 68 (proton acceptor) is an active-site residue. NAD(+) contacts are provided by residues 68–69, 142–143, arginine 153, arginine 170, aspartate 172, and glutamine 242; these read DG and ND.

It belongs to the NAD kinase family. The cofactor is a divalent metal cation.

The protein localises to the cytoplasm. The enzyme catalyses NAD(+) + ATP = ADP + NADP(+) + H(+). Involved in the regulation of the intracellular balance of NAD and NADP, and is a key enzyme in the biosynthesis of NADP. Catalyzes specifically the phosphorylation on 2'-hydroxyl of the adenosine moiety of NAD to yield NADP. This is NAD kinase from Acidobacterium capsulatum (strain ATCC 51196 / DSM 11244 / BCRC 80197 / JCM 7670 / NBRC 15755 / NCIMB 13165 / 161).